A 195-amino-acid chain; its full sequence is Segregation and condensation protein B (195 aa).

Residues 169–195 (LEDVAASQENSREAGGRGSIPGHPGEE) form a disordered region.

It belongs to the ScpB family. In terms of assembly, homodimer. Homodimerization may be required to stabilize the binding of ScpA to the Smc head domains. Component of a cohesin-like complex composed of ScpA, ScpB and the Smc homodimer, in which ScpA and ScpB bind to the head domain of Smc. The presence of the three proteins is required for the association of the complex with DNA.

The protein localises to the cytoplasm. In terms of biological role, participates in chromosomal partition during cell division. May act via the formation of a condensin-like complex containing Smc and ScpA that pull DNA away from mid-cell into both cell halves. The sequence is that of Segregation and condensation protein B from Moorella thermoacetica (strain ATCC 39073 / JCM 9320).